The chain runs to 586 residues: Kelch-like protein 7 (586 aa).

One can recognise a BTB domain in the interval 44–111 (CDVILMVQER…AYTARISVNS (68 aa)). The BACK domain occupies 146–248 (CLGISVLAEC…SKNFLSKTVQ (103 aa)). 6 Kelch repeats span residues 294 to 336 (RIAL…FWDN), 337 to 382 (VVYI…AAEG), 383 to 430 (KIYT…EANG), 431 to 481 (LIYV…FVKD), 483 to 528 (IFAV…AVGS), and 530 to 575 (VYVL…CVVD).

In terms of assembly, homodimer. Component of the BCR(KLHL7) E3 ubiquitin ligase complex, at least composed of CUL3 and KLHL7 and RBX1. In terms of tissue distribution, widely expressed, with highest levels in adult and fetal heart, CNS and adult testis.

The protein localises to the nucleus. Its subcellular location is the cytoplasm. Its pathway is protein modification; protein ubiquitination. In terms of biological role, substrate-specific adapter of a BCR (BTB-CUL3-RBX1) E3 ubiquitin ligase complex. The BCR(KLHL7) complex acts by mediating ubiquitination and subsequent degradation of substrate proteins. Probably mediates 'Lys-48'-linked ubiquitination. This is Kelch-like protein 7 (KLHL7) from Homo sapiens (Human).